Reading from the N-terminus, the 122-residue chain is UPF0102 protein RHECIAT_CH0000358 (122 aa).

Belongs to the UPF0102 family.

This chain is UPF0102 protein RHECIAT_CH0000358, found in Rhizobium etli (strain CIAT 652).